Reading from the N-terminus, the 607-residue chain is Guanine nucleotide-binding protein-like 1 (607 aa).

A compositionally biased stretch (basic residues) spans 1–14 (MPRKKPFSVKQKKK). Residues 1-81 (MPRKKPFSVK…GPRGYDPNRY (81 aa)) are disordered. The span at 15–26 (QLQDKRERKRGL) shows a compositional bias: basic and acidic residues. Phosphoserine occurs at positions 32, 33, and 34. Phosphothreonine is present on residues Thr48 and Thr50. Phosphoserine is present on residues Ser51 and Ser68. The region spanning 178–418 (WRQLWRVLEM…LCDCPGLIFP (241 aa)) is the CP-type G domain. Residue 225–228 (NKVD) participates in GTP binding. Ser324 is subject to Phosphoserine. GTP-binding positions include 367–374 (GFPNVGKS) and 411–415 (DCPGL). The tract at residues 547–607 (GPAGDEEEEE…PYALLGEDEC (61 aa)) is disordered. Residues 550–584 (GDEEEEEEEELSSSCEEEGEEDRDADEEGEGDEET) are compositionally biased toward acidic residues. Residues Ser561, Ser562, and Ser563 each carry the phosphoserine modification.

Belongs to the TRAFAC class YlqF/YawG GTPase family.

In terms of biological role, possible regulatory or functional link with the histocompatibility cluster. This Pan troglodytes (Chimpanzee) protein is Guanine nucleotide-binding protein-like 1 (GNL1).